Consider the following 143-residue polypeptide: Nucleoside diphosphate kinase (143 aa).

Residues Lys-11, Phe-59, Arg-87, Thr-93, Arg-104, and Asn-114 each contribute to the ATP site. His-117 serves as the catalytic Pros-phosphohistidine intermediate.

This sequence belongs to the NDK family. In terms of assembly, homotetramer. Mg(2+) is required as a cofactor.

It localises to the cytoplasm. The catalysed reaction is a 2'-deoxyribonucleoside 5'-diphosphate + ATP = a 2'-deoxyribonucleoside 5'-triphosphate + ADP. It carries out the reaction a ribonucleoside 5'-diphosphate + ATP = a ribonucleoside 5'-triphosphate + ADP. In terms of biological role, major role in the synthesis of nucleoside triphosphates other than ATP. The ATP gamma phosphate is transferred to the NDP beta phosphate via a ping-pong mechanism, using a phosphorylated active-site intermediate. The sequence is that of Nucleoside diphosphate kinase from Nitrosococcus oceani (strain ATCC 19707 / BCRC 17464 / JCM 30415 / NCIMB 11848 / C-107).